The sequence spans 465 residues: UPF0324 membrane protein CC_0425 (465 aa).

Positions 97–132 (HRQPDRAPPARASEQPLRQGRRALRRRPDQRRHRPR) are disordered. Residues 115–132 (QGRRALRRRPDQRRHRPR) show a composition bias toward basic residues. Helical transmembrane passes span 135 to 157 (AAAL…LMAV), 172 to 194 (LLAV…GAGL), 219 to 241 (AALG…GIGA), 251 to 273 (LAEA…LAAS), 286 to 308 (TALV…PPIA), 318 to 340 (AGVF…ASVS), 352 to 374 (LSRI…RTAQ), 378 to 400 (ISGL…ARGL), 405 to 427 (PALV…GAIS), and 442 to 464 (LAIL…TRIF).

The protein belongs to the UPF0324 family.

The protein localises to the cell membrane. This Caulobacter vibrioides (strain ATCC 19089 / CIP 103742 / CB 15) (Caulobacter crescentus) protein is UPF0324 membrane protein CC_0425.